The sequence spans 245 residues: NAD-dependent protein deacetylase (245 aa).

A Deacetylase sirtuin-type domain is found at 1 to 245 (MIFVQQFEEV…EFVEGLSSRK (245 aa)). The NAD(+) site is built by alanine 26, threonine 30, phenylalanine 37, arginine 38, glutamine 105, isoleucine 107, aspartate 108, and histidine 123. Phenylalanine 37 is a binding site for nicotinamide. Nicotinamide contacts are provided by isoleucine 107 and aspartate 108. Histidine 123 functions as the Proton acceptor in the catalytic mechanism. Zn(2+) contacts are provided by cysteine 131, cysteine 134, cysteine 151, and cysteine 154. NAD(+) is bound by residues threonine 190, serine 191, asparagine 216, and isoleucine 234.

Belongs to the sirtuin family. Class U subfamily. The cofactor is Zn(2+).

It is found in the cytoplasm. It carries out the reaction N(6)-acetyl-L-lysyl-[protein] + NAD(+) + H2O = 2''-O-acetyl-ADP-D-ribose + nicotinamide + L-lysyl-[protein]. In terms of biological role, NAD-dependent protein deacetylase which modulates the activities of several enzymes which are inactive in their acetylated form. This Bacillus cereus (strain ZK / E33L) protein is NAD-dependent protein deacetylase.